A 328-amino-acid polypeptide reads, in one-letter code: Chlorate reductase subunit beta (328 aa).

4Fe-4S ferredoxin-type domains are found at residues 6–35, 125–156, and 158–187; these read VAYVFDLNKCIGCHTCTMACKQLWTNRDGR, NHSFYLPRICNHCSNPACLAACPTKAIYKRPE, and GIVVVDQTRCRGYRYCVKACPYGKMYFNLQ. Residues C15, C18, C21, C25, C134, C137, and C142 each contribute to the [4Fe-4S] cluster site. C146, C167, and C173 together coordinate [3Fe-4S] cluster. C177, C194, C197, C209, and C213 together coordinate [4Fe-4S] cluster.

In terms of assembly, heterotrimer of alpha, beta and gamma subunits. [3Fe-4S] cluster is required as a cofactor. [4Fe-4S] cluster serves as cofactor.

The protein localises to the periplasm. Functionally, electron transfer subunit of the terminal reductase during anaerobic growth on chlorate. The chain is Chlorate reductase subunit beta (clrB) from Ideonella dechloratans.